The following is a 501-amino-acid chain: ATP synthase subunit alpha (501 aa).

ATP is bound at residue 169-176 (GDRQTGKT).

Belongs to the ATPase alpha/beta chains family. F-type ATPases have 2 components, CF(1) - the catalytic core - and CF(0) - the membrane proton channel. CF(1) has five subunits: alpha(3), beta(3), gamma(1), delta(1), epsilon(1). CF(0) has three main subunits: a(1), b(2) and c(9-12). The alpha and beta chains form an alternating ring which encloses part of the gamma chain. CF(1) is attached to CF(0) by a central stalk formed by the gamma and epsilon chains, while a peripheral stalk is formed by the delta and b chains.

The protein localises to the cell membrane. The catalysed reaction is ATP + H2O + 4 H(+)(in) = ADP + phosphate + 5 H(+)(out). Its function is as follows. Produces ATP from ADP in the presence of a proton gradient across the membrane. The alpha chain is a regulatory subunit. This is ATP synthase subunit alpha from Streptococcus gordonii (strain Challis / ATCC 35105 / BCRC 15272 / CH1 / DL1 / V288).